The primary structure comprises 68 residues: Large ribosomal subunit protein uL29 (68 aa).

This sequence belongs to the universal ribosomal protein uL29 family.

The polypeptide is Large ribosomal subunit protein uL29 (Persephonella marina (strain DSM 14350 / EX-H1)).